A 505-amino-acid chain; its full sequence is Tyrosine-protein kinase FRK (505 aa).

2 positions are modified to phosphoserine: serine 37 and serine 40. Positions arginine 42 to serine 110 constitute an SH3 domain. One can recognise an SH2 domain in the interval tryptophan 116–cysteine 208. Threonine 178 carries the post-translational modification Phosphothreonine. Residues isoleucine 234–phenylalanine 491 form the Protein kinase domain. ATP-binding positions include leucine 240–valine 248 and lysine 262. Aspartate 354 serves as the catalytic Proton acceptor. Residue tyrosine 387 is modified to Phosphotyrosine; by autocatalysis.

This sequence belongs to the protein kinase superfamily. Tyr protein kinase family. SRC subfamily. As to quaternary structure, interacts (via the SH3-domain) with PTEN. Interacts with RB1. In terms of tissue distribution, predominantly expressed in epithelial derived cell lines and tissues, especially normal liver, kidney, breast and colon.

Its subcellular location is the cytoplasm. It localises to the nucleus. The catalysed reaction is L-tyrosyl-[protein] + ATP = O-phospho-L-tyrosyl-[protein] + ADP + H(+). Its function is as follows. Non-receptor tyrosine-protein kinase that negatively regulates cell proliferation. Positively regulates PTEN protein stability through phosphorylation of PTEN on 'Tyr-336', which in turn prevents its ubiquitination and degradation, possibly by reducing its binding to NEDD4. May function as a tumor suppressor. This is Tyrosine-protein kinase FRK (FRK) from Homo sapiens (Human).